We begin with the raw amino-acid sequence, 159 residues long: Ribosomal RNA large subunit methyltransferase H (159 aa).

S-adenosyl-L-methionine-binding positions include Leu-76, Gly-108, and 127 to 132 (FGLLTL).

This sequence belongs to the RNA methyltransferase RlmH family. Homodimer.

It is found in the cytoplasm. It carries out the reaction pseudouridine(1915) in 23S rRNA + S-adenosyl-L-methionine = N(3)-methylpseudouridine(1915) in 23S rRNA + S-adenosyl-L-homocysteine + H(+). Its function is as follows. Specifically methylates the pseudouridine at position 1915 (m3Psi1915) in 23S rRNA. This is Ribosomal RNA large subunit methyltransferase H from Streptococcus equi subsp. zooepidemicus (strain H70).